A 178-amino-acid chain; its full sequence is ATP-dependent protease subunit HslV (178 aa).

Thr7 is a catalytic residue. Residues Gly162, Cys165, and Thr168 each coordinate Na(+).

The protein belongs to the peptidase T1B family. HslV subfamily. As to quaternary structure, a double ring-shaped homohexamer of HslV is capped on each side by a ring-shaped HslU homohexamer. The assembly of the HslU/HslV complex is dependent on binding of ATP.

Its subcellular location is the cytoplasm. The catalysed reaction is ATP-dependent cleavage of peptide bonds with broad specificity.. Its activity is regulated as follows. Allosterically activated by HslU binding. Functionally, protease subunit of a proteasome-like degradation complex believed to be a general protein degrading machinery. The sequence is that of ATP-dependent protease subunit HslV from Burkholderia orbicola (strain AU 1054).